The chain runs to 149 residues: 3-dehydroquinate dehydratase (149 aa).

Residue Tyr-26 is the Proton acceptor of the active site. Residues Asn-77, His-83, and Asp-90 each coordinate substrate. The active-site Proton donor is the His-103. Substrate contacts are provided by residues 104–105 (LS) and Arg-114.

This sequence belongs to the type-II 3-dehydroquinase family. Homododecamer.

It carries out the reaction 3-dehydroquinate = 3-dehydroshikimate + H2O. It functions in the pathway metabolic intermediate biosynthesis; chorismate biosynthesis; chorismate from D-erythrose 4-phosphate and phosphoenolpyruvate: step 3/7. Its function is as follows. Catalyzes a trans-dehydration via an enolate intermediate. The chain is 3-dehydroquinate dehydratase from Aeromonas hydrophila subsp. hydrophila (strain ATCC 7966 / DSM 30187 / BCRC 13018 / CCUG 14551 / JCM 1027 / KCTC 2358 / NCIMB 9240 / NCTC 8049).